A 292-amino-acid chain; its full sequence is Undecaprenyl-diphosphatase 2 (292 aa).

The next 5 membrane-spanning stretches (helical) occupy residues 89 to 109, 118 to 138, 203 to 223, 232 to 252, and 263 to 283; these read WLVILGTLPIGLLGVTLQDAI, LIATTLIVLGLILGGADWYAS, FLLAMPAVLASGVFELRSIGG, PTILATFVAFVTGYAAIAWFL, and FVLYRVGLGLLLFSLLVGGAL.

It belongs to the UppP family.

The protein resides in the cell membrane. The catalysed reaction is di-trans,octa-cis-undecaprenyl diphosphate + H2O = di-trans,octa-cis-undecaprenyl phosphate + phosphate + H(+). Catalyzes the dephosphorylation of undecaprenyl diphosphate (UPP). Confers resistance to bacitracin. This Frankia casuarinae (strain DSM 45818 / CECT 9043 / HFP020203 / CcI3) protein is Undecaprenyl-diphosphatase 2.